Consider the following 428-residue polypeptide: Aerobic C4-dicarboxylate transport protein (428 aa).

The next 9 membrane-spanning stretches (helical) occupy residues L5–Y27, M47–M64, A77–V99, V141–A163, V184–F206, L216–L238, V289–M311, I326–G348, and V353–I375.

This sequence belongs to the dicarboxylate/amino acid:cation symporter (DAACS) (TC 2.A.23) family.

The protein localises to the cell inner membrane. In terms of biological role, responsible for the transport of dicarboxylates such as succinate, fumarate, and malate from the periplasm across the membrane. The sequence is that of Aerobic C4-dicarboxylate transport protein from Salmonella typhi.